A 430-amino-acid polypeptide reads, in one-letter code: Gamma-glutamyl phosphate reductase (430 aa).

This sequence belongs to the gamma-glutamyl phosphate reductase family.

It is found in the cytoplasm. It carries out the reaction L-glutamate 5-semialdehyde + phosphate + NADP(+) = L-glutamyl 5-phosphate + NADPH + H(+). Its pathway is amino-acid biosynthesis; L-proline biosynthesis; L-glutamate 5-semialdehyde from L-glutamate: step 2/2. Catalyzes the NADPH-dependent reduction of L-glutamate 5-phosphate into L-glutamate 5-semialdehyde and phosphate. The product spontaneously undergoes cyclization to form 1-pyrroline-5-carboxylate. The sequence is that of Gamma-glutamyl phosphate reductase from Rhodopseudomonas palustris (strain BisB5).